Consider the following 704-residue polypeptide: MGVGEMNKEVIDKVIKFLMMVILMGTIVIWIMMPTSTYKEIWLTSMRAKLGKSIYYGRPGVNLLVYMFPMILLAFLGCIYLHLKKSTTVNQFNSGVEKKRAKFGALRRPMLVNGPLGIVTVTEVMFLTMFMALLLWSLANYMYRTFVNVTSESAATDGNNLWQARLDLIAVRIGIVGNICLAFLFYPVARGSSLLAAVGLTSESSIKYHIWLGHLVMIIFTSHGLCYFIYWISKNQLVSKMLEWDRTAVSNLAGEIALVAGLMMWVTTYPKIRRRLFEVFFYSHYLYIVFMLFFVFHVGISHALIPLPGFYIFLVDRFLRFLQSRNNVKLVSARVLPCDTVELNFSKNPMLMYSPTSTMFVNIPSISKLQWHPFTIISSSKLEPETLSVMIKSQGKWSTKLYDMLSSSSSDQINRLAVSVEGPYGPSSTDFLRHESLVMVSGGSGITPFISIVRDLFYMSSTHKCKIPKMTLICAFKNSSDLSMLDLILPTSGLTTDMASFVDIQIKAFVTREEKTSVKESTHNRNIIKTRHFKPNVSDQPISPILGPNSWLCLAAILSSSFMIFIVIIAIITRYHIHPIDQNSEKYTWAYKSLIYLVSISITVVTTSTAAMLWNKKKYYAKNDQYVDNLSPVIIESSPQQLISQSTDIHYGERPNLNKLLVGLKGSSVGILVCGPKKMRQKVAKICSFGSAENLHFESISFSW.

Residues 1-16 (MGVGEMNKEVIDKVIK) lie on the Cytoplasmic side of the membrane. A helical transmembrane segment spans residues 17–36 (FLMMVILMGTIVIWIMMPTS). At 37–62 (TYKEIWLTSMRAKLGKSIYYGRPGVN) the chain is on the lumenal side. Residues 63–81 (LLVYMFPMILLAFLGCIYL) traverse the membrane as a helical segment. Topologically, residues 82 to 115 (HLKKSTTVNQFNSGVEKKRAKFGALRRPMLVNGP) are cytoplasmic. A helical membrane pass occupies residues 116 to 139 (LGIVTVTEVMFLTMFMALLLWSLA). Topologically, residues 140 to 207 (NYMYRTFVNV…VGLTSESSIK (68 aa)) are lumenal. The Ferric oxidoreductase domain maps to 174 to 294 (GIVGNICLAF…YLYIVFMLFF (121 aa)). A helical transmembrane segment spans residues 208–231 (YHIWLGHLVMIIFTSHGLCYFIYW). Heme-binding residues include histidine 209 and histidine 223. The Cytoplasmic segment spans residues 232–282 (ISKNQLVSKMLEWDRTAVSNLAGEIALVAGLMMWVTTYPKIRRRLFEVFFY). Residues 283 to 307 (SHYLYIVFMLFFVFHVGISHALIPL) form a helical membrane-spanning segment. Residues histidine 284 and histidine 297 each contribute to the heme site. Over 308–329 (PGFYIFLVDRFLRFLQSRNNVK) the chain is Lumenal. Positions 323-430 (QSRNNVKLVS…EGPYGPSSTD (108 aa)) constitute an FAD-binding FR-type domain. The helical transmembrane segment at 330-350 (LVSARVLPCDTVELNFSKNPM) threads the bilayer. The Cytoplasmic segment spans residues 351–550 (LMYSPTSTMF…PISPILGPNS (200 aa)). 372-375 (HPFT) is an FAD binding site. 422–425 (GPYG) is an NAD(+) binding site. A helical transmembrane segment spans residues 551–573 (WLCLAAILSSSFMIFIVIIAIIT). Topologically, residues 574-592 (RYHIHPIDQNSEKYTWAYK) are lumenal. Residues 593 to 614 (SLIYLVSISITVVTTSTAAMLW) form a helical membrane-spanning segment. The Cytoplasmic portion of the chain corresponds to 615-704 (NKKKYYAKND…LHFESISFSW (90 aa)).

This sequence belongs to the ferric reductase (FRE) family. FAD is required as a cofactor. Expressed in siliques. Detected in roots.

It localises to the membrane. The catalysed reaction is 2 a Fe(II)-siderophore + NAD(+) + H(+) = 2 a Fe(III)-siderophore + NADH. Its function is as follows. Ferric chelate reductase involved in iron reduction in roots. May participate in the transport of electrons to a Fe(3+) ion via FAD and heme intermediates. The polypeptide is Probable ferric reduction oxidase 1 (FRO1) (Arabidopsis thaliana (Mouse-ear cress)).